We begin with the raw amino-acid sequence, 342 residues long: Autoinducer 2 import system permease protein LsrC (342 aa).

At methionine 1–alanine 13 the chain is on the periplasmic side. Residues leucine 14–valine 34 traverse the membrane as a helical segment. The Cytoplasmic segment spans residues glutamine 35 to threonine 38. The helical transmembrane segment at methionine 39–leucine 59 threads the bilayer. Topologically, residues threonine 60–serine 69 are periplasmic. The helical transmembrane segment at isoleucine 70–valine 90 threads the bilayer. Topologically, residues alanine 91 to cysteine 92 are cytoplasmic. A helical membrane pass occupies residues valine 93–leucine 113. Lysine 114 is a topological domain (periplasmic). The chain crosses the membrane as a helical span at residues isoleucine 115–tryptophan 135. At threonine 136 to proline 154 the chain is on the cytoplasmic side. A helical transmembrane segment spans residues leucine 155–tryptophan 175. Residues leucine 176–serine 212 lie on the Periplasmic side of the membrane. Residues leucine 213 to proline 233 form a helical membrane-spanning segment. Residues asparagine 234 to glycine 251 are Cytoplasmic-facing. The helical transmembrane segment at glycine 252–leucine 272 threads the bilayer. The Periplasmic portion of the chain corresponds to threonine 273–arginine 283. The chain crosses the membrane as a helical span at residues isoleucine 284–aspartate 304. At glycine 305–alanine 342 the chain is on the cytoplasmic side.

Belongs to the binding-protein-dependent transport system permease family. AraH/RbsC subfamily. As to quaternary structure, the complex is composed of two ATP-binding proteins (LsrA), two transmembrane proteins (LsrC and LsrD) and a solute-binding protein (LsrB).

It is found in the cell inner membrane. Functionally, part of the ABC transporter complex LsrABCD involved in autoinducer 2 (AI-2) import. Probably responsible for the translocation of the substrate across the membrane. This Escherichia coli O157:H7 protein is Autoinducer 2 import system permease protein LsrC (lsrC).